Reading from the N-terminus, the 242-residue chain is UPF0309 protein Oant_1457 (242 aa).

The region spanning 30–214 (AAELITAAAL…AKLVGKGDAP (185 aa)) is the SIS domain.

It belongs to the UPF0309 family.

This Brucella anthropi (strain ATCC 49188 / DSM 6882 / CCUG 24695 / JCM 21032 / LMG 3331 / NBRC 15819 / NCTC 12168 / Alc 37) (Ochrobactrum anthropi) protein is UPF0309 protein Oant_1457.